A 75-amino-acid polypeptide reads, in one-letter code: Small ribosomal subunit protein bS18 (75 aa).

The protein belongs to the bacterial ribosomal protein bS18 family. In terms of assembly, part of the 30S ribosomal subunit. Forms a tight heterodimer with protein bS6.

In terms of biological role, binds as a heterodimer with protein bS6 to the central domain of the 16S rRNA, where it helps stabilize the platform of the 30S subunit. In Sodalis glossinidius (strain morsitans), this protein is Small ribosomal subunit protein bS18.